The sequence spans 189 residues: Peptidyl-tRNA hydrolase (189 aa).

Y14 is a tRNA binding site. H19 functions as the Proton acceptor in the catalytic mechanism. TRNA-binding residues include F61, N63, and N109.

The protein belongs to the PTH family. As to quaternary structure, monomer.

It is found in the cytoplasm. It carries out the reaction an N-acyl-L-alpha-aminoacyl-tRNA + H2O = an N-acyl-L-amino acid + a tRNA + H(+). In terms of biological role, hydrolyzes ribosome-free peptidyl-tRNAs (with 1 or more amino acids incorporated), which drop off the ribosome during protein synthesis, or as a result of ribosome stalling. Its function is as follows. Catalyzes the release of premature peptidyl moieties from peptidyl-tRNA molecules trapped in stalled 50S ribosomal subunits, and thus maintains levels of free tRNAs and 50S ribosomes. This is Peptidyl-tRNA hydrolase from Sulfurovum sp. (strain NBC37-1).